Here is a 216-residue protein sequence, read N- to C-terminus: Small ribosomal subunit protein uS4 (216 aa).

The 65-residue stretch at 111–175 (RRLQTQVLRL…SPLVSESHPE (65 aa)) folds into the S4 RNA-binding domain. A disordered region spans residues 194–216 (VAEAKQAKEKPPERGGRKRRGRR). Over residues 198 to 208 (KQAKEKPPERG) the composition is skewed to basic and acidic residues.

Belongs to the universal ribosomal protein uS4 family. In terms of assembly, part of the 30S ribosomal subunit. Contacts protein S5. The interaction surface between S4 and S5 is involved in control of translational fidelity.

Functionally, one of the primary rRNA binding proteins, it binds directly to 16S rRNA where it nucleates assembly of the body of the 30S subunit. In terms of biological role, with S5 and S12 plays an important role in translational accuracy. This chain is Small ribosomal subunit protein uS4, found in Methanosarcina barkeri (strain Fusaro / DSM 804).